The sequence spans 457 residues: Argininosuccinate lyase (457 aa).

This sequence belongs to the lyase 1 family. Argininosuccinate lyase subfamily.

The protein resides in the cytoplasm. The catalysed reaction is 2-(N(omega)-L-arginino)succinate = fumarate + L-arginine. Its pathway is amino-acid biosynthesis; L-arginine biosynthesis; L-arginine from L-ornithine and carbamoyl phosphate: step 3/3. The protein is Argininosuccinate lyase of Escherichia coli O127:H6 (strain E2348/69 / EPEC).